A 355-amino-acid polypeptide reads, in one-letter code: Peptide chain release factor 1 (355 aa).

Gln231 carries the post-translational modification N5-methylglutamine.

The protein belongs to the prokaryotic/mitochondrial release factor family. Methylated by PrmC. Methylation increases the termination efficiency of RF1.

It is found in the cytoplasm. In terms of biological role, peptide chain release factor 1 directs the termination of translation in response to the peptide chain termination codons UAG and UAA. This Aliarcobacter butzleri (strain RM4018) (Arcobacter butzleri) protein is Peptide chain release factor 1.